Here is a 316-residue protein sequence, read N- to C-terminus: Cysteine synthase (316 aa).

Residues Asn7 and Arg35 each coordinate hydrogen sulfide. An N6-(pyridoxal phosphate)lysine modification is found at Lys42. Pyridoxal 5'-phosphate contacts are provided by residues Asn72 and 177 to 181; that span reads GTGGS. Residue Leu268 coordinates hydrogen sulfide. Residue Ser272 coordinates pyridoxal 5'-phosphate.

It belongs to the cysteine synthase/cystathionine beta-synthase family. As to quaternary structure, homodimer. Pyridoxal 5'-phosphate serves as cofactor.

The enzyme catalyses O-acetyl-L-serine + hydrogen sulfide = L-cysteine + acetate. It participates in amino-acid biosynthesis; L-cysteine biosynthesis; L-cysteine from L-serine: step 2/2. The chain is Cysteine synthase (cysK) from Haemophilus influenzae (strain ATCC 51907 / DSM 11121 / KW20 / Rd).